Reading from the N-terminus, the 255-residue chain is 5'-nucleotidase SurE (255 aa).

The a divalent metal cation site is built by aspartate 8, aspartate 9, serine 40, and asparagine 92.

This sequence belongs to the SurE nucleotidase family. A divalent metal cation is required as a cofactor.

Its subcellular location is the cytoplasm. It carries out the reaction a ribonucleoside 5'-phosphate + H2O = a ribonucleoside + phosphate. Nucleotidase that shows phosphatase activity on nucleoside 5'-monophosphates. The polypeptide is 5'-nucleotidase SurE (Brucella suis (strain ATCC 23445 / NCTC 10510)).